Consider the following 1235-residue polypeptide: UPF0507 protein DEHA2G04334g (1235 aa).

Positions 323-487 constitute a VPS9 domain; sequence QNDDSDAIKI…LSSSMNDEPQ (165 aa). Residues 1097–1124 are disordered; it reads STTEADTTDTTDATDATHASPNLANSTN. Residues 1100–1115 show a composition bias toward low complexity; sequence EADTTDTTDATDATHA.

It belongs to the UPF0507 family.

This Debaryomyces hansenii (strain ATCC 36239 / CBS 767 / BCRC 21394 / JCM 1990 / NBRC 0083 / IGC 2968) (Yeast) protein is UPF0507 protein DEHA2G04334g.